The primary structure comprises 635 residues: Probable serine/threonine-protein kinase DDB_G0270146 (635 aa).

Residues 77 to 329 (VISDIAIGKG…AKELLSHPWI (253 aa)) form the Protein kinase domain. Residues 83-91 (IGKGAFATV) and K106 each bind ATP. The active-site Proton acceptor is D199. Residues 360-392 (SLLSNSSGGDDSVTDSDLSISNQSSRSSSFLLD) show a composition bias toward low complexity. The segment at 360 to 405 (SLLSNSSGGDDSVTDSDLSISNQSSRSSSFLLDDGGGGGGSKNHTV) is disordered. Coiled-coil stretches lie at residues 417–456 (IEFN…KYRE) and 536–585 (KKAL…KDSS). Residues 540–582 (EAQKRREKEQEKLKEQEKLKEKKKEKDIKKEKDKKDKKDKQLK) are compositionally biased toward basic and acidic residues. The segment at 540 to 635 (EAQKRREKEQ…GRSSSKIFNE (96 aa)) is disordered. Residues 583–598 (DSSSSTTTTNSTPSTP) are compositionally biased toward low complexity. Polar residues predominate over residues 626–635 (GRSSSKIFNE).

This sequence belongs to the protein kinase superfamily. STE Ser/Thr protein kinase family. The cofactor is Mg(2+).

It carries out the reaction L-seryl-[protein] + ATP = O-phospho-L-seryl-[protein] + ADP + H(+). It catalyses the reaction L-threonyl-[protein] + ATP = O-phospho-L-threonyl-[protein] + ADP + H(+). The chain is Probable serine/threonine-protein kinase DDB_G0270146 from Dictyostelium discoideum (Social amoeba).